The sequence spans 428 residues: L-rhamnose isomerase (428 aa).

Residues His260, Asp292, and Asp294 each contribute to the Mn(2+) site.

This sequence belongs to the rhamnose isomerase family. The cofactor is Mn(2+).

It is found in the cytoplasm. The enzyme catalyses L-rhamnopyranose = L-rhamnulose. Its pathway is carbohydrate degradation; L-rhamnose degradation; glycerone phosphate from L-rhamnose: step 1/3. Functionally, catalyzes the interconversion of L-rhamnose and L-rhamnulose. This Enterococcus faecalis (strain ATCC 700802 / V583) protein is L-rhamnose isomerase.